Here is a 407-residue protein sequence, read N- to C-terminus: Probable tRNA sulfurtransferase (407 aa).

Positions 61–165 (NEIIQRLSKV…MDAIYIYEKV (105 aa)) constitute a THUMP domain. Residues 183–184 (ML), 208–209 (HF), Arg265, Gly287, and Gln296 each bind ATP.

It belongs to the ThiI family.

The protein resides in the cytoplasm. The enzyme catalyses [ThiI sulfur-carrier protein]-S-sulfanyl-L-cysteine + a uridine in tRNA + 2 reduced [2Fe-2S]-[ferredoxin] + ATP + H(+) = [ThiI sulfur-carrier protein]-L-cysteine + a 4-thiouridine in tRNA + 2 oxidized [2Fe-2S]-[ferredoxin] + AMP + diphosphate. The catalysed reaction is [ThiS sulfur-carrier protein]-C-terminal Gly-Gly-AMP + S-sulfanyl-L-cysteinyl-[cysteine desulfurase] + AH2 = [ThiS sulfur-carrier protein]-C-terminal-Gly-aminoethanethioate + L-cysteinyl-[cysteine desulfurase] + A + AMP + 2 H(+). It participates in cofactor biosynthesis; thiamine diphosphate biosynthesis. Functionally, catalyzes the ATP-dependent transfer of a sulfur to tRNA to produce 4-thiouridine in position 8 of tRNAs, which functions as a near-UV photosensor. Also catalyzes the transfer of sulfur to the sulfur carrier protein ThiS, forming ThiS-thiocarboxylate. This is a step in the synthesis of thiazole, in the thiamine biosynthesis pathway. The sulfur is donated as persulfide by IscS. The chain is Probable tRNA sulfurtransferase from Staphylococcus epidermidis (strain ATCC 35984 / DSM 28319 / BCRC 17069 / CCUG 31568 / BM 3577 / RP62A).